Reading from the N-terminus, the 180-residue chain is Large ribosomal subunit protein uL18m (180 aa).

Belongs to the universal ribosomal protein uL18 family. As to quaternary structure, component of the mitochondrial ribosome large subunit (39S) which comprises a 16S rRNA and about 50 distinct proteins.

The protein resides in the mitochondrion. Its function is as follows. Together with thiosulfate sulfurtransferase (TST), acts as a mitochondrial import factor for the cytosolic 5S rRNA. The precursor form shows RNA chaperone activity; is able to fold the 5S rRNA into an import-competent conformation that is recognized by rhodanese (TST). Both the cytoplasmic and mitochondrial forms are able to bind to the helix IV-loop D in the gamma domain of the 5S rRNA. In Bos taurus (Bovine), this protein is Large ribosomal subunit protein uL18m (MRPL18).